A 723-amino-acid polypeptide reads, in one-letter code: Fatty acid oxidation complex subunit alpha (723 aa).

The enoyl-CoA hydratase/isomerase stretch occupies residues 1-189 (MIYQADTLQV…KIGLLDAVVE (189 aa)). Aspartate 296 is a binding site for substrate. The 3-hydroxyacyl-CoA dehydrogenase stretch occupies residues 311 to 723 (SKDTERAAVL…FYGAQQQGSI (413 aa)). NAD(+) is bound by residues methionine 325, aspartate 344, 401-403 (VVE), lysine 408, and serine 430. The For 3-hydroxyacyl-CoA dehydrogenase activity role is filled by histidine 451. Asparagine 454 is a binding site for NAD(+). Asparagine 501 and tyrosine 661 together coordinate substrate.

This sequence in the N-terminal section; belongs to the enoyl-CoA hydratase/isomerase family. In the C-terminal section; belongs to the 3-hydroxyacyl-CoA dehydrogenase family. In terms of assembly, heterotetramer of two alpha chains (FadB) and two beta chains (FadA).

The catalysed reaction is a (3S)-3-hydroxyacyl-CoA + NAD(+) = a 3-oxoacyl-CoA + NADH + H(+). It catalyses the reaction a (3S)-3-hydroxyacyl-CoA = a (2E)-enoyl-CoA + H2O. It carries out the reaction a 4-saturated-(3S)-3-hydroxyacyl-CoA = a (3E)-enoyl-CoA + H2O. The enzyme catalyses (3S)-3-hydroxybutanoyl-CoA = (3R)-3-hydroxybutanoyl-CoA. The catalysed reaction is a (3Z)-enoyl-CoA = a 4-saturated (2E)-enoyl-CoA. It catalyses the reaction a (3E)-enoyl-CoA = a 4-saturated (2E)-enoyl-CoA. It functions in the pathway lipid metabolism; fatty acid beta-oxidation. Its function is as follows. Involved in the aerobic and anaerobic degradation of long-chain fatty acids via beta-oxidation cycle. Catalyzes the formation of 3-oxoacyl-CoA from enoyl-CoA via L-3-hydroxyacyl-CoA. It can also use D-3-hydroxyacyl-CoA and cis-3-enoyl-CoA as substrate. In Vibrio parahaemolyticus serotype O3:K6 (strain RIMD 2210633), this protein is Fatty acid oxidation complex subunit alpha.